The following is a 397-amino-acid chain: 3-hydroxybenzoate 6-hydroxylase (397 aa).

Belongs to the 3-hydroxybenzoate 6-hydroxylase family. Monomer. The cofactor is FAD.

The catalysed reaction is 3-hydroxybenzoate + NADH + O2 + H(+) = 2,5-dihydroxybenzoate + NAD(+) + H2O. Its activity is regulated as follows. Inhibited by copper, mercury and iron ions. Catalyzes the NAD- or NADP-dependent conversion of 3-hydroxybenzoate to gentisate. NAD and NADP function equally well. In Klebsiella oxytoca, this protein is 3-hydroxybenzoate 6-hydroxylase (mhbM).